An 858-amino-acid chain; its full sequence is Zinc finger protein ZXDC (858 aa).

Disordered regions lie at residues 1–73, 85–108, and 142–175; these read MDLP…GGDS, DTHG…PAAA, and AAPS…GSPA. Positions 59–68 are enriched in pro residues; that stretch reads APGPSPPPPE. Over residues 142–152 the composition is skewed to low complexity; the sequence is AAPSLHPATTP. 10 C2H2-type zinc fingers span residues 176 to 200, 209 to 233, 239 to 263, 269 to 291, 298 to 322, 329 to 353, 359 to 383, 389 to 413, 419 to 443, and 452 to 477; these read YRCP…LLTH, FKCP…LQSH, FSCP…MKGH, FKCE…QRSH, YKCD…NRAH, FSCS…LRSH, FICD…KRKH, FTCP…SITH, FECP…SKKH, and SRCP…VRQH. A compositionally biased stretch (polar residues) spans 624–634; sequence DSPALTPSNNL. The segment at 624–652 is disordered; it reads DSPALTPSNNLTAPGTTPTSSDTTQETGS. Residues 635–651 are compositionally biased toward low complexity; that stretch reads TAPGTTPTSSDTTQETG. Lysine 661 participates in a covalent cross-link: Glycyl lysine isopeptide (Lys-Gly) (interchain with G-Cter in SUMO). 2 disordered regions span residues 671–714 and 727–751; these read DVVQ…LESG and VKKK…KVKG. The span at 681–692 shows a compositional bias: polar residues; the sequence is GPSQSVLSSSTE.

This sequence belongs to the ZXD family. In terms of assembly, self-associates. Interacts with ZXDB and CIITA. Post-translationally, sumoylated at Lys-661 with SUMO1, SUMO2 and SUMO3; sumoylation enhances the activity of the transcriptional activation domain.

The protein resides in the nucleus. Its function is as follows. Cooperates with CIITA to promote transcription of MHC class I and MHC class II genes. The sequence is that of Zinc finger protein ZXDC (Zxdc) from Mus musculus (Mouse).